The chain runs to 199 residues: Recombination protein RecR (199 aa).

The segment at 56-71 (CATCGNVAQEELCNIC) adopts a C4-type zinc-finger fold. One can recognise a Toprim domain in the interval 79–174 (SVICVVEEPK…KVTRLASGLP (96 aa)).

The protein belongs to the RecR family.

Its function is as follows. May play a role in DNA repair. It seems to be involved in an RecBC-independent recombinational process of DNA repair. It may act with RecF and RecO. This is Recombination protein RecR from Streptomyces avermitilis (strain ATCC 31267 / DSM 46492 / JCM 5070 / NBRC 14893 / NCIMB 12804 / NRRL 8165 / MA-4680).